Reading from the N-terminus, the 129-residue chain is Glycine cleavage system H protein (129 aa).

The 82-residue stretch at serine 23–lysine 104 folds into the Lipoyl-binding domain. Lysine 64 is modified (N6-lipoyllysine).

This sequence belongs to the GcvH family. The glycine cleavage system is composed of four proteins: P, T, L and H. Requires (R)-lipoate as cofactor.

Its function is as follows. The glycine cleavage system catalyzes the degradation of glycine. The H protein shuttles the methylamine group of glycine from the P protein to the T protein. This is Glycine cleavage system H protein from Thiobacillus denitrificans (strain ATCC 25259 / T1).